Consider the following 235-residue polypeptide: Probable deoxycytidine kinase FPV151 (235 aa).

30 to 38 contacts ATP; sequence GNISAGKST. The substrate site is built by E53, Y68, and Q79. The active-site Proton acceptor is E104. 3 residues coordinate substrate: R105, D110, and E172.

This sequence belongs to the DCK/DGK family.

The catalysed reaction is 2'-deoxycytidine + a ribonucleoside 5'-triphosphate = dCMP + a ribonucleoside 5'-diphosphate + H(+). The polypeptide is Probable deoxycytidine kinase FPV151 (Vertebrata (FPV)).